Consider the following 322-residue polypeptide: UDP-N-acetylenolpyruvoylglucosamine reductase (322 aa).

The FAD-binding PCMH-type domain maps to 36-202; it reads RAGGPAQVLF…TSVLFEGVPG (167 aa). R182 is an active-site residue. The active-site Proton donor is S231. E301 is a catalytic residue.

The protein belongs to the MurB family. The cofactor is FAD.

It is found in the cytoplasm. The enzyme catalyses UDP-N-acetyl-alpha-D-muramate + NADP(+) = UDP-N-acetyl-3-O-(1-carboxyvinyl)-alpha-D-glucosamine + NADPH + H(+). The protein operates within cell wall biogenesis; peptidoglycan biosynthesis. In terms of biological role, cell wall formation. The sequence is that of UDP-N-acetylenolpyruvoylglucosamine reductase from Brucella abortus (strain S19).